A 128-amino-acid polypeptide reads, in one-letter code: Translation initiation factor 5A (128 aa).

Lys35 is subject to Hypusine.

This sequence belongs to the eIF-5A family.

The protein resides in the cytoplasm. Functions by promoting the formation of the first peptide bond. The sequence is that of Translation initiation factor 5A (eif5a) from Methanosarcina acetivorans (strain ATCC 35395 / DSM 2834 / JCM 12185 / C2A).